The following is a 446-amino-acid chain: MREIVYIQTGQCGNQIGAAFWQTISGEHGLDSNGIYNGSSELQLERMNVYFNEASNNKYVPRAVLVDLEPGTMDAVRAGPFGQLFRPDNFIFGQSSAGNNWAKGHYTEGAELVDQVLDVVRREAEGCDCLQGFQITHSLGGGTGSGMGTLLLSKIREEFPDRMMATFSVVPSPKVSDTVVEPYNATLSVHQLVENSDETFCIDNEALYDICMRTLKLNNPAYGDLNYLVSAVMSGITTCLRFPGQLNSDLRKLAVNMVPFPRLHFFMVGFAPLTSPGAHSFRAVTVPELTQQMFDPKNMMAASDFRNGRYLTCCSIFRGKVAMKEVEDQMRNVQNKNSTYFVEWIPNNIQTALCAIPPRGLKMSSTFIGNSTSIQELFKRVGEQFSAMFRRKAFLHWYTGEGMDEMEFTEAESNMNDLVSEYQQYQEAGIDEEEEYEDEAPMEAEE.

Residues glutamine 11, glutamate 69, serine 138, glycine 142, threonine 143, glycine 144, asparagine 204, and asparagine 226 each contribute to the GTP site. Residue glutamate 69 coordinates Mg(2+).

It belongs to the tubulin family. As to quaternary structure, dimer of alpha and beta chains. A typical microtubule is a hollow water-filled tube with an outer diameter of 25 nm and an inner diameter of 15 nM. Alpha-beta heterodimers associate head-to-tail to form protofilaments running lengthwise along the microtubule wall with the beta-tubulin subunit facing the microtubule plus end conferring a structural polarity. Microtubules usually have 13 protofilaments but different protofilament numbers can be found in some organisms and specialized cells. Mg(2+) serves as cofactor.

The protein localises to the cytoplasm. Its subcellular location is the cytoskeleton. Tubulin is the major constituent of microtubules, a cylinder consisting of laterally associated linear protofilaments composed of alpha- and beta-tubulin heterodimers. Microtubules grow by the addition of GTP-tubulin dimers to the microtubule end, where a stabilizing cap forms. Below the cap, tubulin dimers are in GDP-bound state, owing to GTPase activity of alpha-tubulin. The protein is Tubulin beta-2 chain (tub2) of Hypocrea rufa (Trichoderma viride).